A 558-amino-acid polypeptide reads, in one-letter code: Glucose-6-phosphate isomerase (558 aa).

N-acetylalanine is present on A2. Residue K12 is modified to N6-acetyllysine. Residue K34 is modified to N6-(2-hydroxyisobutyryl)lysine. Position 107 is a phosphoserine (S107). Residue T109 is modified to Phosphothreonine. K142 is modified (N6-acetyllysine). 159–160 (GS) lines the D-glucose 6-phosphate pocket. Position 185 is a phosphoserine; by CK2 (S185). 210–215 (SKTFTT) contacts D-glucose 6-phosphate. T250 is modified (phosphothreonine). 3 residues coordinate D-glucose 6-phosphate: Q354, E358, and H389. E358 functions as the Proton donor in the catalytic mechanism. Residue H389 is part of the active site. Residue K454 is modified to N6-acetyllysine; alternate. At K454 the chain carries N6-malonyllysine; alternate. An N6-succinyllysine; alternate modification is found at K454. S455 bears the Phosphoserine mark. Residue K519 participates in D-glucose 6-phosphate binding. K519 is an active-site residue.

It belongs to the GPI family. Homodimer; in the catalytically active form. Monomer in the secreted form. Post-translationally, phosphorylation at Ser-185 by CK2 has been shown to decrease enzymatic activity and may contribute to secretion by a non-classical secretory pathway. In terms of processing, ISGylated.

It localises to the cytoplasm. The protein localises to the secreted. The catalysed reaction is alpha-D-glucose 6-phosphate = beta-D-fructose 6-phosphate. It functions in the pathway carbohydrate degradation; glycolysis; D-glyceraldehyde 3-phosphate and glycerone phosphate from D-glucose: step 2/4. Strongly inhibited by erythrose 4-phosphate. In the cytoplasm, catalyzes the conversion of glucose-6-phosphate to fructose-6-phosphate, the second step in glycolysis, and the reverse reaction during gluconeogenesis. Besides it's role as a glycolytic enzyme, also acts as a secreted cytokine: acts as an angiogenic factor (AMF) that stimulates endothelial cell motility. Acts as a neurotrophic factor, neuroleukin, for spinal and sensory neurons. It is secreted by lectin-stimulated T-cells and induces immunoglobulin secretion. This is Glucose-6-phosphate isomerase from Homo sapiens (Human).